A 228-amino-acid chain; its full sequence is 7-cyano-7-deazaguanine synthase (228 aa).

7 to 17 (LSGGLDSSTAL) contributes to the ATP binding site. Zn(2+) contacts are provided by cysteine 190, cysteine 202, cysteine 205, and cysteine 208.

The protein belongs to the QueC family. Requires Zn(2+) as cofactor.

It catalyses the reaction 7-carboxy-7-deazaguanine + NH4(+) + ATP = 7-cyano-7-deazaguanine + ADP + phosphate + H2O + H(+). It functions in the pathway purine metabolism; 7-cyano-7-deazaguanine biosynthesis. Functionally, catalyzes the ATP-dependent conversion of 7-carboxy-7-deazaguanine (CDG) to 7-cyano-7-deazaguanine (preQ(0)). In Acaryochloris marina (strain MBIC 11017), this protein is 7-cyano-7-deazaguanine synthase.